The sequence spans 208 residues: Small ribosomal subunit protein uS3 (208 aa).

Residues 17–86 (IDEYLEKELR…NPQIEVEEIK (70 aa)) enclose the KH type-2 domain.

It belongs to the universal ribosomal protein uS3 family. Part of the 30S ribosomal subunit.

Functionally, binds the lower part of the 30S subunit head. This is Small ribosomal subunit protein uS3 from Thermococcus onnurineus (strain NA1).